The primary structure comprises 120 residues: UPF0102 protein CBU_1742 (120 aa).

Belongs to the UPF0102 family.

The sequence is that of UPF0102 protein CBU_1742 from Coxiella burnetii (strain RSA 493 / Nine Mile phase I).